The primary structure comprises 89 residues: Small ribosomal subunit protein uS14A (89 aa).

This sequence belongs to the universal ribosomal protein uS14 family. As to quaternary structure, part of the 30S ribosomal subunit. Contacts proteins S3 and S10.

Functionally, binds 16S rRNA, required for the assembly of 30S particles and may also be responsible for determining the conformation of the 16S rRNA at the A site. The polypeptide is Small ribosomal subunit protein uS14A (Oceanobacillus iheyensis (strain DSM 14371 / CIP 107618 / JCM 11309 / KCTC 3954 / HTE831)).